A 511-amino-acid polypeptide reads, in one-letter code: Mediator of RNA polymerase II transcription subunit 17 (511 aa).

The protein belongs to the Mediator complex subunit 17 family. Component of the Mediator complex.

It localises to the nucleus. Functionally, component of the Mediator complex, a coactivator involved in the regulated transcription of nearly all RNA polymerase II-dependent genes. Mediator functions as a bridge to convey information from gene-specific regulatory proteins to the basal RNA polymerase II transcription machinery. Mediator is recruited to promoters by direct interactions with regulatory proteins and serves as a scaffold for the assembly of a functional preinitiation complex with RNA polymerase II and the general transcription factors. The protein is Mediator of RNA polymerase II transcription subunit 17 (SRB4) of Yarrowia lipolytica (strain CLIB 122 / E 150) (Yeast).